A 129-amino-acid chain; its full sequence is uncharacterized protein (129 aa).

Residues Ile77–Leu97 form a helical membrane-spanning segment. The interval Ser109–Ala129 is disordered. Residues Asn111–Ala129 are compositionally biased toward basic and acidic residues.

It is found in the vacuole membrane. This is an uncharacterized protein from Saccharomyces cerevisiae (strain ATCC 204508 / S288c) (Baker's yeast).